The following is a 582-amino-acid chain: Zinc finger protein 614 (582 aa).

The region spanning 8-79 (LTLEDVAVEF…VAKIQNKNCP (72 aa)) is the KRAB domain. Residues 202 to 224 (HACIECEQTFLRKSQLIYHENIH) form a C2H2-type 1 zinc finger. The segment at 254 to 278 (KICIPNEYRKGSTVNSRLIAHQQTH) adopts a C2H2-type 2; degenerate zinc-finger fold. 10 consecutive C2H2-type zinc fingers follow at residues 284–306 (YMCS…QRTH), 312–334 (YVCN…QRTH), 340–362 (YICS…QRTH), 368–390 (YICS…QRSH), 396–418 (YICS…QRTH), 424–446 (YICN…QRTH), 452–474 (YECN…ERCH), 480–502 (FVCT…QRIH), 508–530 (YECN…QRTH), and 536–558 (YGCS…KKMH).

This sequence belongs to the krueppel C2H2-type zinc-finger protein family.

It is found in the nucleus. Its function is as follows. May be involved in transcriptional regulation. The polypeptide is Zinc finger protein 614 (ZNF614) (Macaca fascicularis (Crab-eating macaque)).